We begin with the raw amino-acid sequence, 303 residues long: Pycsar effector protein XpPycTIR (303 aa).

Residue 14–138 (LVATLTEHRL…RRIAATLARR (125 aa)) coordinates a nucleoside 3',5'-cyclic phosphate. The TIR-like stretch occupies residues 154–273 (RVFIMSSVEA…DLAGLTTIPY (120 aa)).

The protein localises to the cytoplasm. It carries out the reaction NAD(+) + H2O = ADP-D-ribose + nicotinamide + H(+). In terms of biological role, pycsar (pyrimidine cyclase system for antiphage resistance) provides immunity against bacteriophage. The pyrimidine cyclase (PycC) synthesizes cyclic nucleotides in response to infection; these serve as specific second messenger signals. The signals activate the adjacent effector, leading to bacterial cell death and abortive phage infection. A clade B Pycsar system. Functionally, the effector gene of a two-gene Pycsar system. Expression of this and adjacent uridylate cyclase XpPycC (AC P0DV28) confers resistance to bacteriophage T7. When cells expressing the Pycsar system are infected by phage T7 at low multiplicity of infection (0.2 MOI) the culture survivey, at 2.0 MOI bacteria enter growth arrest. The same cells enter growth arrest after exposure to 2.5 mM cUMP but not cCMP; the effector protein responds only to the cUMP usually produced by its cognate NTP cyclase. NAD(+) levels in infected cells are depleted between 5 and 10 minutes after infection with T7 at MOI of 2. Probably only responds to cUMP. In Xanthomonas perforans, this protein is Pycsar effector protein XpPycTIR.